The primary structure comprises 297 residues: ATP phosphoribosyltransferase (297 aa).

It belongs to the ATP phosphoribosyltransferase family.

The protein resides in the cytoplasm. It catalyses the reaction 1-(5-phospho-beta-D-ribosyl)-ATP + diphosphate = 5-phospho-alpha-D-ribose 1-diphosphate + ATP. Its pathway is amino-acid biosynthesis; L-histidine biosynthesis; L-histidine from 5-phospho-alpha-D-ribose 1-diphosphate: step 1/9. In terms of biological role, catalyzes the condensation of ATP and 5-phosphoribose 1-diphosphate to form N'-(5'-phosphoribosyl)-ATP (PR-ATP). Has a crucial role in the pathway because the rate of histidine biosynthesis seems to be controlled primarily by regulation of the enzymatic activity. This Eremothecium gossypii (strain ATCC 10895 / CBS 109.51 / FGSC 9923 / NRRL Y-1056) (Yeast) protein is ATP phosphoribosyltransferase (HIS1).